The primary structure comprises 425 residues: Serine--tRNA ligase (425 aa).

Position 233 to 235 (233 to 235 (TAE)) interacts with L-serine. ATP is bound at residue 264–266 (RRE). Glutamate 287 provides a ligand contact to L-serine. Residue 351 to 354 (EISS) coordinates ATP. Position 387 (serine 387) interacts with L-serine.

This sequence belongs to the class-II aminoacyl-tRNA synthetase family. Type-1 seryl-tRNA synthetase subfamily. In terms of assembly, homodimer. The tRNA molecule binds across the dimer.

It localises to the cytoplasm. The catalysed reaction is tRNA(Ser) + L-serine + ATP = L-seryl-tRNA(Ser) + AMP + diphosphate + H(+). The enzyme catalyses tRNA(Sec) + L-serine + ATP = L-seryl-tRNA(Sec) + AMP + diphosphate + H(+). It functions in the pathway aminoacyl-tRNA biosynthesis; selenocysteinyl-tRNA(Sec) biosynthesis; L-seryl-tRNA(Sec) from L-serine and tRNA(Sec): step 1/1. In terms of biological role, catalyzes the attachment of serine to tRNA(Ser). Is also able to aminoacylate tRNA(Sec) with serine, to form the misacylated tRNA L-seryl-tRNA(Sec), which will be further converted into selenocysteinyl-tRNA(Sec). The sequence is that of Serine--tRNA ligase from Thermotoga petrophila (strain ATCC BAA-488 / DSM 13995 / JCM 10881 / RKU-1).